Consider the following 461-residue polypeptide: Putative transcription initiation factor IIB-like protein (461 aa).

Residues 113-142 (SESLENIQSENSENNDNFTDNNTKKSPTKS) are disordered. Residues 121-137 (SENSENNDNFTDNNTKK) show a composition bias toward low complexity. Residues 141–173 (KSRICSGCGSKGTLLEDQSSSVLVCSECGMIND) form a TFIIB-type zinc finger. Cysteine 145, cysteine 165, and cysteine 168 together coordinate Zn(2+). 2 consecutive repeat copies span residues 246 to 327 (ISTI…EKKV) and 360 to 430 (IRRH…DVTI).

The protein belongs to the TFIIB family.

The polypeptide is Putative transcription initiation factor IIB-like protein (Acanthamoeba polyphaga mimivirus (APMV)).